We begin with the raw amino-acid sequence, 1032 residues long: Protein translocase subunit SecA (1032 aa).

ATP contacts are provided by residues Gln121, 139–143 (GEGKT), and Asp570. Residues 945-975 (TAGGSENATEDAPKPAKRGVGGAARRVSNAA) form a disordered region. Zn(2+)-binding residues include Cys994, Cys996, Cys1005, and His1006.

The protein belongs to the SecA family. In terms of assembly, monomer and homodimer. Part of the essential Sec protein translocation apparatus which comprises SecA, SecYEG and auxiliary proteins SecDF. Other proteins may also be involved. Zn(2+) is required as a cofactor.

Its subcellular location is the cell membrane. It localises to the cytoplasm. It catalyses the reaction ATP + H2O + cellular proteinSide 1 = ADP + phosphate + cellular proteinSide 2.. Functionally, part of the Sec protein translocase complex. Interacts with the SecYEG preprotein conducting channel. Has a central role in coupling the hydrolysis of ATP to the transfer of proteins into and across the cell membrane, serving as an ATP-driven molecular motor driving the stepwise translocation of polypeptide chains across the membrane. The chain is Protein translocase subunit SecA from Herpetosiphon aurantiacus (strain ATCC 23779 / DSM 785 / 114-95).